Consider the following 111-residue polypeptide: Probable 4-amino-4-deoxy-L-arabinose-phosphoundecaprenol flippase subunit ArnE (111 aa).

At 1–35 (MIWLTLVFASLLSVAGQLCQKQATCFVAINKRRKH) the chain is on the cytoplasmic side. Residues 36–56 (IVLWLGLALACLGLAMVLWLL) traverse the membrane as a helical segment. An EamA domain is found at 40-109 (LGLALACLGL…IIGGIVILGS (70 aa)). The Periplasmic segment spans residues 57-60 (VLQN). Residues 61–81 (VPVGIAYPMLSLNFVWVTLAA) traverse the membrane as a helical segment. At 82–87 (VKLWHE) the chain is on the cytoplasmic side. Residues 88 to 108 (PVSPRHWCGVAFIIGGIVILG) form a helical membrane-spanning segment. Residues 109 to 111 (STV) lie on the Periplasmic side of the membrane.

The protein belongs to the ArnE family. In terms of assembly, heterodimer of ArnE and ArnF.

Its subcellular location is the cell inner membrane. Its pathway is bacterial outer membrane biogenesis; lipopolysaccharide biosynthesis. Its function is as follows. Translocates 4-amino-4-deoxy-L-arabinose-phosphoundecaprenol (alpha-L-Ara4N-phosphoundecaprenol) from the cytoplasmic to the periplasmic side of the inner membrane. The protein is Probable 4-amino-4-deoxy-L-arabinose-phosphoundecaprenol flippase subunit ArnE of Escherichia coli (strain ATCC 8739 / DSM 1576 / NBRC 3972 / NCIMB 8545 / WDCM 00012 / Crooks).